The sequence spans 352 residues: Glutamine synthetase (352 aa).

The GS beta-grasp domain maps to 3–82 (YQAEYIWIDG…LCEVQLTDFT (80 aa)). The GS catalytic domain occupies 87-352 (TRAAALGVAE…TTPAPAEASV (266 aa)). Mg(2+)-binding residues include E108 and E110. E164 contacts ATP. 2 residues coordinate Mg(2+): E169 and E176. An L-glutamate-binding site is contributed by E272.

It belongs to the glutamine synthetase family. In terms of assembly, homooctamer and homotetramer. The cofactor is Mg(2+).

It localises to the cytoplasm. The catalysed reaction is L-glutamate + NH4(+) + ATP = L-glutamine + ADP + phosphate + H(+). Its function is as follows. Catalyzes the ATP-dependent biosynthesis of glutamine from glutamate and ammonia. In Frankia alni, this protein is Glutamine synthetase.